A 347-amino-acid polypeptide reads, in one-letter code: DNA-directed RNA polymerase subunit alpha (347 aa).

Residues 1–226 (MLISQRPTLS…ELFGLARELN (226 aa)) form an alpha N-terminal domain (alpha-NTD) region. An alpha C-terminal domain (alpha-CTD) region spans residues 241-347 (ADHIASFALP…DQDYAETEQL (107 aa)).

This sequence belongs to the RNA polymerase alpha chain family. As to quaternary structure, homodimer. The RNAP catalytic core consists of 2 alpha, 1 beta, 1 beta' and 1 omega subunit. When a sigma factor is associated with the core the holoenzyme is formed, which can initiate transcription.

It carries out the reaction RNA(n) + a ribonucleoside 5'-triphosphate = RNA(n+1) + diphosphate. Functionally, DNA-dependent RNA polymerase catalyzes the transcription of DNA into RNA using the four ribonucleoside triphosphates as substrates. This chain is DNA-directed RNA polymerase subunit alpha, found in Mycobacterium ulcerans (strain Agy99).